The chain runs to 88 residues: Small ribosomal subunit protein uS15 (88 aa).

A compositionally biased stretch (basic and acidic residues) spans methionine 1–aspartate 12. The segment at methionine 1–proline 24 is disordered.

It belongs to the universal ribosomal protein uS15 family. As to quaternary structure, part of the 30S ribosomal subunit. Forms a bridge to the 50S subunit in the 70S ribosome, contacting the 23S rRNA.

In terms of biological role, one of the primary rRNA binding proteins, it binds directly to 16S rRNA where it helps nucleate assembly of the platform of the 30S subunit by binding and bridging several RNA helices of the 16S rRNA. Functionally, forms an intersubunit bridge (bridge B4) with the 23S rRNA of the 50S subunit in the ribosome. The chain is Small ribosomal subunit protein uS15 from Salinibacter ruber (strain DSM 13855 / M31).